We begin with the raw amino-acid sequence, 262 residues long: Taurine import ATP-binding protein TauB (262 aa).

An ABC transporter domain is found at 4 to 233; it reads LELERISAQY…RYAAGESARA (230 aa). 38 to 45 serves as a coordination point for ATP; sequence GPSGSGKT.

Belongs to the ABC transporter superfamily. Taurine importer (TC 3.A.1.17.1) family. As to quaternary structure, the complex is composed of two ATP-binding proteins (TauB), two transmembrane proteins (TauC) and a solute-binding protein (TauA).

The protein localises to the cell inner membrane. It carries out the reaction taurine(out) + ATP + H2O = taurine(in) + ADP + phosphate + H(+). Part of the ABC transporter complex TauABC involved in taurine import. Responsible for energy coupling to the transport system. The sequence is that of Taurine import ATP-binding protein TauB from Pseudomonas putida (Arthrobacter siderocapsulatus).